Reading from the N-terminus, the 280-residue chain is Energy-coupling factor transporter ATP-binding protein EcfA2 (280 aa).

The ABC transporter domain occupies 3 to 245 (INLQNVSYTY…VSLLEKKQLG (243 aa)). 40-47 (GHTGSGKS) provides a ligand contact to ATP.

Belongs to the ABC transporter superfamily. Energy-coupling factor EcfA family. As to quaternary structure, forms a stable energy-coupling factor (ECF) transporter complex composed of 2 membrane-embedded substrate-binding proteins (S component), 2 ATP-binding proteins (A component) and 2 transmembrane proteins (T component).

The protein localises to the cell membrane. ATP-binding (A) component of a common energy-coupling factor (ECF) ABC-transporter complex. Unlike classic ABC transporters this ECF transporter provides the energy necessary to transport a number of different substrates. The sequence is that of Energy-coupling factor transporter ATP-binding protein EcfA2 from Streptococcus pyogenes serotype M1.